Consider the following 95-residue polypeptide: Co-chaperonin GroES (95 aa).

Belongs to the GroES chaperonin family. In terms of assembly, heptamer of 7 subunits arranged in a ring. Interacts with the chaperonin GroEL.

The protein resides in the cytoplasm. Its function is as follows. Together with the chaperonin GroEL, plays an essential role in assisting protein folding. The GroEL-GroES system forms a nano-cage that allows encapsulation of the non-native substrate proteins and provides a physical environment optimized to promote and accelerate protein folding. GroES binds to the apical surface of the GroEL ring, thereby capping the opening of the GroEL channel. This is Co-chaperonin GroES from Lachnoclostridium phytofermentans (strain ATCC 700394 / DSM 18823 / ISDg) (Clostridium phytofermentans).